Consider the following 417-residue polypeptide: Guanine nucleotide-exchange factor SEC12 (417 aa).

At 1-388 (MGRRRGVELY…QLHLLPSRRS (388 aa)) the chain is on the cytoplasmic side. Tyr10 carries the 3'-nitrotyrosine modification. A disordered region spans residues 101–135 (KGSKAEKSGSKEQGPRQRKGAPPAEKKSGAQVHPE). The segment covering 103-115 (SKAEKSGSKEQGP) has biased composition (basic and acidic residues). 3 WD repeats span residues 152 to 191 (SNEPLQKVVCFNHDNTLLATGGTDGHVRVWKVPSLEKVLE), 194 to 232 (AHEGEIGDLTLGPDGKLVTVGWDFKASVWQKDQLVTQLQ), and 298 to 337 (CGHEVISCLSVSDSGTFLGLGTVTGSVAIYIAFSLQRLYY). The helical transmembrane segment at 389 to 409 (VPVWLLLLLCVGLIIVTILLL) threads the bilayer. Over 410–417 (QTAFPGFL) the chain is Lumenal.

Interacts with SAR1B (GDP-bound form). Interacts with MIA2; recruits PREB to endoplasmic reticulum exit sites. Interacts with CIDEB; facilitating loading of SCAP-SREBP into COPII vesicles.

The protein localises to the endoplasmic reticulum membrane. The protein resides in the nucleus. Guanine nucleotide exchange factor (GEF) that regulates the assembly of the coat protein complex II/COPII in endoplasmic reticulum (ER) to Golgi vesicle-mediated transport. Selectively activates SAR1A and SAR1B by promoting the exchange of guanosine diphosphate (GDP) for guanosine triphosphate (GTP) in these small GTPases. In their activated GTP-bound state, SAR1A and SAR1B insert into the membrane of the endoplasmic reticulum where they recruit the remainder of the coat protein complex II/COPII which is responsible for both the sorting of proteins and the deformation and budding of membranes into vesicles destined to the Golgi. Functionally, was first identified based on its probable role in the regulation of pituitary gene transcription. Binds to the prolactin gene (PRL) promoter and seems to activate transcription. This is Guanine nucleotide-exchange factor SEC12 from Mus musculus (Mouse).